The sequence spans 290 residues: 33 kDa chaperonin (290 aa).

2 disulfide bridges follow: Cys-235/Cys-237 and Cys-268/Cys-271.

This sequence belongs to the HSP33 family. Post-translationally, under oxidizing conditions two disulfide bonds are formed involving the reactive cysteines. Under reducing conditions zinc is bound to the reactive cysteines and the protein is inactive.

Its subcellular location is the cytoplasm. Its function is as follows. Redox regulated molecular chaperone. Protects both thermally unfolding and oxidatively damaged proteins from irreversible aggregation. Plays an important role in the bacterial defense system toward oxidative stress. This chain is 33 kDa chaperonin, found in Streptococcus pneumoniae (strain P1031).